The sequence spans 101 residues: Small ribosomal subunit protein uS14 (101 aa).

It belongs to the universal ribosomal protein uS14 family. As to quaternary structure, part of the 30S ribosomal subunit. Contacts proteins S3 and S10.

Its function is as follows. Binds 16S rRNA, required for the assembly of 30S particles and may also be responsible for determining the conformation of the 16S rRNA at the A site. In Brucella abortus (strain 2308), this protein is Small ribosomal subunit protein uS14.